Consider the following 783-residue polypeptide: Probable alpha,alpha-trehalose-phosphate synthase [UDP-forming] 3 (783 aa).

The segment at 11 to 456 is glycosyltransferase; sequence QTLLVVANRL…GFDFLSELND (446 aa).

It in the N-terminal section; belongs to the glycosyltransferase 20 family. The protein in the C-terminal section; belongs to the trehalose phosphatase family.

The catalysed reaction is D-glucose 6-phosphate + UDP-alpha-D-glucose = alpha,alpha-trehalose 6-phosphate + UDP + H(+). This Arabidopsis thaliana (Mouse-ear cress) protein is Probable alpha,alpha-trehalose-phosphate synthase [UDP-forming] 3 (TPS3).